A 273-amino-acid chain; its full sequence is Endoplasmic reticulum resident protein 27 (273 aa).

An N-terminal signal peptide occupies residues 1 to 25; that stretch reads MEAAPSRFMFLLFLLTCELAAEVAA. Residues 39-152 enclose the Thioredoxin domain; the sequence is EPTWLTDVPA…MVTEYNPVTV (114 aa). Asn100 carries an N-linked (GlcNAc...) asparagine glycan. The PDIA3-binding site stretch occupies residues 230-233; it reads DEWD. A Prevents secretion from ER motif is present at residues 270–273; that stretch reads KVEL.

It belongs to the protein disulfide isomerase family. As to quaternary structure, interacts with PDIA3.

Its subcellular location is the endoplasmic reticulum lumen. Specifically binds unfolded proteins and may recruit protein disulfide isomerase PDIA3 to unfolded substrates. Binds protein substrates via a hydrophobic pocket in the C-terminal domain. May play a role in the unfolded stress response. The polypeptide is Endoplasmic reticulum resident protein 27 (ERP27) (Homo sapiens (Human)).